A 563-amino-acid polypeptide reads, in one-letter code: Arginine--tRNA ligase (563 aa).

Residues Pro121 to His131 carry the 'HIGH' region motif.

The protein belongs to the class-I aminoacyl-tRNA synthetase family. In terms of assembly, monomer.

The protein resides in the cytoplasm. It carries out the reaction tRNA(Arg) + L-arginine + ATP = L-arginyl-tRNA(Arg) + AMP + diphosphate. The chain is Arginine--tRNA ligase from Streptococcus pneumoniae (strain ATCC BAA-255 / R6).